Here is a 443-residue protein sequence, read N- to C-terminus: Tol-Pal system protein TolB (443 aa).

An N-terminal signal peptide occupies residues 1–33; sequence MKIGIINTKIRTVFSAFACMIAASLVCTMPARA.

It belongs to the TolB family. The Tol-Pal system is composed of five core proteins: the inner membrane proteins TolA, TolQ and TolR, the periplasmic protein TolB and the outer membrane protein Pal. They form a network linking the inner and outer membranes and the peptidoglycan layer.

The protein localises to the periplasm. Part of the Tol-Pal system, which plays a role in outer membrane invagination during cell division and is important for maintaining outer membrane integrity. The sequence is that of Tol-Pal system protein TolB from Brucella abortus (strain S19).